The sequence spans 396 residues: Elongation factor Tu (396 aa).

The tr-type G domain maps to 10 to 206 (KPHVNVGTIG…ALDSYIPTPE (197 aa)). Positions 19–26 (GHVDHGKT) are G1. Residue 19–26 (GHVDHGKT) participates in GTP binding. T26 lines the Mg(2+) pocket. The G2 stretch occupies residues 60–64 (GITIN). A G3 region spans residues 81 to 84 (DCPG). GTP is bound by residues 81–85 (DCPGH) and 136–139 (NKCD). The interval 136–139 (NKCD) is G4. The segment at 174-176 (SAK) is G5.

The protein belongs to the TRAFAC class translation factor GTPase superfamily. Classic translation factor GTPase family. EF-Tu/EF-1A subfamily. In terms of assembly, monomer.

The protein localises to the cytoplasm. The enzyme catalyses GTP + H2O = GDP + phosphate + H(+). In terms of biological role, GTP hydrolase that promotes the GTP-dependent binding of aminoacyl-tRNA to the A-site of ribosomes during protein biosynthesis. This chain is Elongation factor Tu, found in Herminiimonas arsenicoxydans.